Reading from the N-terminus, the 209-residue chain is Uracil phosphoribosyltransferase (209 aa).

Residues R79, R104, and D131–S139 contribute to the 5-phospho-alpha-D-ribose 1-diphosphate site. Uracil is bound by residues I194 and G199–A201. D200 contributes to the 5-phospho-alpha-D-ribose 1-diphosphate binding site.

It belongs to the UPRTase family. Mg(2+) is required as a cofactor.

It carries out the reaction UMP + diphosphate = 5-phospho-alpha-D-ribose 1-diphosphate + uracil. Its pathway is pyrimidine metabolism; UMP biosynthesis via salvage pathway; UMP from uracil: step 1/1. Allosterically activated by GTP. In terms of biological role, catalyzes the conversion of uracil and 5-phospho-alpha-D-ribose 1-diphosphate (PRPP) to UMP and diphosphate. The polypeptide is Uracil phosphoribosyltransferase (Lysinibacillus sphaericus (strain C3-41)).